Reading from the N-terminus, the 154-residue chain is Peptide deformylase (154 aa).

Fe cation-binding residues include cysteine 90 and histidine 132. Glutamate 133 is an active-site residue. Residue histidine 136 participates in Fe cation binding.

Belongs to the polypeptide deformylase family. Requires Fe(2+) as cofactor.

It carries out the reaction N-terminal N-formyl-L-methionyl-[peptide] + H2O = N-terminal L-methionyl-[peptide] + formate. Its function is as follows. Removes the formyl group from the N-terminal Met of newly synthesized proteins. Requires at least a dipeptide for an efficient rate of reaction. N-terminal L-methionine is a prerequisite for activity but the enzyme has broad specificity at other positions. The sequence is that of Peptide deformylase from Halothermothrix orenii (strain H 168 / OCM 544 / DSM 9562).